Here is an 80-residue protein sequence, read N- to C-terminus: Exodeoxyribonuclease 7 small subunit (80 aa).

Belongs to the XseB family. In terms of assembly, heterooligomer composed of large and small subunits.

The protein resides in the cytoplasm. The enzyme catalyses Exonucleolytic cleavage in either 5'- to 3'- or 3'- to 5'-direction to yield nucleoside 5'-phosphates.. In terms of biological role, bidirectionally degrades single-stranded DNA into large acid-insoluble oligonucleotides, which are then degraded further into small acid-soluble oligonucleotides. This is Exodeoxyribonuclease 7 small subunit from Marinomonas sp. (strain MWYL1).